The chain runs to 57 residues: UPF0391 membrane protein Arad_3976 (57 aa).

2 helical membrane passes run 4 to 24 (WAII…SGVS) and 33 to 53 (VLFA…VMAG).

The protein belongs to the UPF0391 family.

The protein localises to the cell membrane. The sequence is that of UPF0391 membrane protein Arad_3976 from Rhizobium rhizogenes (strain K84 / ATCC BAA-868) (Agrobacterium radiobacter).